Consider the following 137-residue polypeptide: Large ribosomal subunit protein uL22 (137 aa).

Belongs to the universal ribosomal protein uL22 family. As to quaternary structure, part of the 50S ribosomal subunit.

Functionally, this protein binds specifically to 23S rRNA; its binding is stimulated by other ribosomal proteins, e.g. L4, L17, and L20. It is important during the early stages of 50S assembly. It makes multiple contacts with different domains of the 23S rRNA in the assembled 50S subunit and ribosome. Its function is as follows. The globular domain of the protein is located near the polypeptide exit tunnel on the outside of the subunit, while an extended beta-hairpin is found that lines the wall of the exit tunnel in the center of the 70S ribosome. This is Large ribosomal subunit protein uL22 from Flavobacterium psychrophilum (strain ATCC 49511 / DSM 21280 / CIP 103535 / JIP02/86).